A 744-amino-acid chain; its full sequence is Eukaryotic translation initiation factor 3 subunit B (744 aa).

The interval 1–21 is disordered; that stretch reads MAPSFDHLPDPEEDEYDEEEL. Residues 11-21 are compositionally biased toward acidic residues; sequence PEEDEYDEEEL. One can recognise an RRM domain in the interval 40–126; sequence TFVVIDGLPE…HTLRVNKLTD (87 aa). WD repeat units follow at residues 193-232, 234-290, 307-348, and 577-622; these read DRQH…RQKR, AHPF…PLRS, PIKR…LLDK, and ADHY…LREE.

The protein belongs to the eIF-3 subunit B family. In terms of assembly, component of the eukaryotic translation initiation factor 3 (eIF-3) complex.

The protein resides in the cytoplasm. In terms of biological role, RNA-binding component of the eukaryotic translation initiation factor 3 (eIF-3) complex, which is involved in protein synthesis of a specialized repertoire of mRNAs and, together with other initiation factors, stimulates binding of mRNA and methionyl-tRNAi to the 40S ribosome. The eIF-3 complex specifically targets and initiates translation of a subset of mRNAs involved in cell proliferation. In Botryotinia fuckeliana (strain B05.10) (Noble rot fungus), this protein is Eukaryotic translation initiation factor 3 subunit B (prt1).